The primary structure comprises 64 residues: Large ribosomal subunit protein bL33 (64 aa).

This sequence belongs to the bacterial ribosomal protein bL33 family.

This Crocosphaera subtropica (strain ATCC 51142 / BH68) (Cyanothece sp. (strain ATCC 51142)) protein is Large ribosomal subunit protein bL33.